A 284-amino-acid polypeptide reads, in one-letter code: Acetylglutamate kinase (284 aa).

Substrate contacts are provided by residues 64-65 (GG), Arg-86, and Asn-181.

The protein belongs to the acetylglutamate kinase family. ArgB subfamily.

It is found in the cytoplasm. It catalyses the reaction N-acetyl-L-glutamate + ATP = N-acetyl-L-glutamyl 5-phosphate + ADP. The protein operates within amino-acid biosynthesis; L-arginine biosynthesis; N(2)-acetyl-L-ornithine from L-glutamate: step 2/4. Catalyzes the ATP-dependent phosphorylation of N-acetyl-L-glutamate. The protein is Acetylglutamate kinase of Nitratiruptor sp. (strain SB155-2).